The chain runs to 110 residues: Hydrogenase maturation factor HypA (110 aa).

Position 2 (histidine 2) interacts with Ni(2+). Cysteine 70, cysteine 73, cysteine 86, and cysteine 89 together coordinate Zn(2+).

Belongs to the HypA/HybF family.

Its function is as follows. Involved in the maturation of [NiFe] hydrogenases. Required for nickel insertion into the metal center of the hydrogenase. The protein is Hydrogenase maturation factor HypA of Geotalea uraniireducens (strain Rf4) (Geobacter uraniireducens).